Consider the following 174-residue polypeptide: Transcriptional repressor NrdR (174 aa).

Residues 3-34 fold into a zinc finger; the sequence is CPFCQHSDTRVIDSRVSEDGTTIRRRRECEAC. Residues 49 to 139 enclose the ATP-cone domain; the sequence is PTVVKSDGGR…VYRSFQDVAD (91 aa).

This sequence belongs to the NrdR family. Zn(2+) is required as a cofactor.

Negatively regulates transcription of bacterial ribonucleotide reductase nrd genes and operons by binding to NrdR-boxes. This chain is Transcriptional repressor NrdR, found in Xanthomonas oryzae pv. oryzae (strain MAFF 311018).